A 423-amino-acid chain; its full sequence is Putative RING-H2 finger protein ATL49 (423 aa).

A helical transmembrane segment spans residues 43–63; the sequence is ILLIIIILSIIFFISGLLHIL. An RING-type; atypical zinc finger spans residues 126-168; the sequence is CPVCLCEFETEDKLRLLPKCSHAFHVECIDTWLLSHSTCPLCR. 2 disordered regions span residues 213–236 and 377–399; these read NNDSESTRIRSGRKSCDPDGDMDG and HRIPPEESLKSENSESLETKTPS. Over residues 379–389 the composition is skewed to basic and acidic residues; the sequence is IPPEESLKSEN.

Belongs to the RING-type zinc finger family. ATL subfamily.

The protein localises to the membrane. It catalyses the reaction S-ubiquitinyl-[E2 ubiquitin-conjugating enzyme]-L-cysteine + [acceptor protein]-L-lysine = [E2 ubiquitin-conjugating enzyme]-L-cysteine + N(6)-ubiquitinyl-[acceptor protein]-L-lysine.. Its pathway is protein modification; protein ubiquitination. Its function is as follows. May be involved in female gametophyte development. The chain is Putative RING-H2 finger protein ATL49 (ATL49) from Arabidopsis thaliana (Mouse-ear cress).